A 461-amino-acid chain; its full sequence is Carboxypeptidase Rv3627c (461 aa).

Residues 1–28 (MGPTRWRKSTHVVVGAAVLAFVAVVVAA) form the signal peptide. Serine 114 serves as the catalytic Acyl-ester intermediate. Lysine 117 (proton acceptor) is an active-site residue. Residue serine 295 is part of the active site.

This sequence belongs to the peptidase S13 family.

Carboxypeptidase that cleaves terminal D-alanine from peptidoglycan in the mycobacterial cell wall. May cleave L-Lys-D-Ala and/or D-Ala-D-Ala peptide bonds. Exerts important effects on mycobacterial cell morphology and cell division. This is Carboxypeptidase Rv3627c from Mycobacterium tuberculosis (strain ATCC 25618 / H37Rv).